A 240-amino-acid polypeptide reads, in one-letter code: Uridylate kinase (240 aa).

Residue 12 to 15 (KLSG) participates in ATP binding. Gly54 is a binding site for UMP. Positions 55 and 59 each coordinate ATP. UMP is bound by residues Asp74 and 135–142 (TGNPFFTT). Thr162, Tyr168, and Asp171 together coordinate ATP.

The protein belongs to the UMP kinase family. As to quaternary structure, homohexamer.

The protein resides in the cytoplasm. The enzyme catalyses UMP + ATP = UDP + ADP. It functions in the pathway pyrimidine metabolism; CTP biosynthesis via de novo pathway; UDP from UMP (UMPK route): step 1/1. Inhibited by UTP. Functionally, catalyzes the reversible phosphorylation of UMP to UDP. This Xanthomonas campestris pv. campestris (strain ATCC 33913 / DSM 3586 / NCPPB 528 / LMG 568 / P 25) protein is Uridylate kinase.